Consider the following 352-residue polypeptide: Coproporphyrin III ferrochelatase (352 aa).

Residues serine 52 and tyrosine 121 each coordinate Fe-coproporphyrin III. Histidine 181 and glutamate 269 together coordinate Fe(2+).

It belongs to the ferrochelatase family.

Its subcellular location is the cytoplasm. The catalysed reaction is Fe-coproporphyrin III + 2 H(+) = coproporphyrin III + Fe(2+). It functions in the pathway porphyrin-containing compound metabolism; protoheme biosynthesis. In terms of biological role, involved in coproporphyrin-dependent heme b biosynthesis. Catalyzes the insertion of ferrous iron into coproporphyrin III to form Fe-coproporphyrin III. The polypeptide is Coproporphyrin III ferrochelatase (Nocardia farcinica (strain IFM 10152)).